Here is a 94-residue protein sequence, read N- to C-terminus: Large ribosomal subunit protein bL25 (94 aa).

It belongs to the bacterial ribosomal protein bL25 family. As to quaternary structure, part of the 50S ribosomal subunit; part of the 5S rRNA/L5/L18/L25 subcomplex. Contacts the 5S rRNA. Binds to the 5S rRNA independently of L5 and L18.

This is one of the proteins that binds to the 5S RNA in the ribosome where it forms part of the central protuberance. This chain is Large ribosomal subunit protein bL25, found in Proteus mirabilis (strain HI4320).